A 692-amino-acid polypeptide reads, in one-letter code: Elongation factor G (692 aa).

Residues 8–283 (NRIRNIGIAA…AVIDYLPAPT (276 aa)) form the tr-type G domain. Residues 17–24 (AHIDAGKT), 81–85 (DTPGH), and 135–138 (NKMD) contribute to the GTP site.

It belongs to the TRAFAC class translation factor GTPase superfamily. Classic translation factor GTPase family. EF-G/EF-2 subfamily.

Its subcellular location is the cytoplasm. In terms of biological role, catalyzes the GTP-dependent ribosomal translocation step during translation elongation. During this step, the ribosome changes from the pre-translocational (PRE) to the post-translocational (POST) state as the newly formed A-site-bound peptidyl-tRNA and P-site-bound deacylated tRNA move to the P and E sites, respectively. Catalyzes the coordinated movement of the two tRNA molecules, the mRNA and conformational changes in the ribosome. This Helicobacter pylori (strain G27) protein is Elongation factor G.